The following is a 418-amino-acid chain: Glutamyl-tRNA reductase (418 aa).

Substrate contacts are provided by residues 49–52, serine 109, 114–116, and glutamine 120; these read TCNR and EPQ. Residue cysteine 50 is the Nucleophile of the active site. 189–194 is an NADP(+) binding site; that stretch reads GAGETI.

This sequence belongs to the glutamyl-tRNA reductase family. In terms of assembly, homodimer.

It carries out the reaction (S)-4-amino-5-oxopentanoate + tRNA(Glu) + NADP(+) = L-glutamyl-tRNA(Glu) + NADPH + H(+). Its pathway is porphyrin-containing compound metabolism; protoporphyrin-IX biosynthesis; 5-aminolevulinate from L-glutamyl-tRNA(Glu): step 1/2. Functionally, catalyzes the NADPH-dependent reduction of glutamyl-tRNA(Glu) to glutamate 1-semialdehyde (GSA). This chain is Glutamyl-tRNA reductase, found in Salmonella dublin (strain CT_02021853).